The following is a 498-amino-acid chain: ATP synthase subunit beta, chloroplastic (498 aa).

172-179 (GGAGVGKT) contacts ATP.

The protein belongs to the ATPase alpha/beta chains family. As to quaternary structure, F-type ATPases have 2 components, CF(1) - the catalytic core - and CF(0) - the membrane proton channel. CF(1) has five subunits: alpha(3), beta(3), gamma(1), delta(1), epsilon(1). CF(0) has four main subunits: a(1), b(1), b'(1) and c(9-12).

It is found in the plastid. The protein resides in the chloroplast thylakoid membrane. It catalyses the reaction ATP + H2O + 4 H(+)(in) = ADP + phosphate + 5 H(+)(out). Produces ATP from ADP in the presence of a proton gradient across the membrane. The catalytic sites are hosted primarily by the beta subunits. In Daucus carota (Wild carrot), this protein is ATP synthase subunit beta, chloroplastic.